We begin with the raw amino-acid sequence, 261 residues long: MTHQTHAYHMVNPSPWPLTGALSALLMSSGLTMWFHFNSLILLTTGLVTNILTMYQWWRDVIRESTFQGHHTPVVQKGLRYGMVLFIISEVLFFTGFFWAFYHSSLAPTPELGGCWPPTGINPLNPLEVPLLNTSVLLASGVSITWAHHSLMEGNRKQMLQALFITIALGVYFTLLQASEYHEASFTISDGVYGSTFFVATGFHGLHVIIGSTFLIVCFLRQLKFHFTSDHHFGFEAAAWYWHFVDVVWLFLYVSIYWWGS.

Topologically, residues 1 to 15 (MTHQTHAYHMVNPSP) are mitochondrial matrix. A helical transmembrane segment spans residues 16–34 (WPLTGALSALLMSSGLTMW). At 35–40 (FHFNSL) the chain is on the mitochondrial intermembrane side. A helical transmembrane segment spans residues 41–66 (ILLTTGLVTNILTMYQWWRDVIREST). The Mitochondrial matrix segment spans residues 67 to 72 (FQGHHT). A helical membrane pass occupies residues 73–105 (PVVQKGLRYGMVLFIISEVLFFTGFFWAFYHSS). Over 106–128 (LAPTPELGGCWPPTGINPLNPLE) the chain is Mitochondrial intermembrane. Residues 129 to 152 (VPLLNTSVLLASGVSITWAHHSLM) form a helical membrane-spanning segment. The Mitochondrial matrix portion of the chain corresponds to 153–155 (EGN). A helical membrane pass occupies residues 156–183 (RKQMLQALFITIALGVYFTLLQASEYHE). Residues 184-190 (ASFTISD) lie on the Mitochondrial intermembrane side of the membrane. The helical transmembrane segment at 191–223 (GVYGSTFFVATGFHGLHVIIGSTFLIVCFLRQL) threads the bilayer. The Mitochondrial matrix segment spans residues 224–232 (KFHFTSDHH). Residues 233–256 (FGFEAAAWYWHFVDVVWLFLYVSI) form a helical membrane-spanning segment. Over 257–261 (YWWGS) the chain is Mitochondrial intermembrane.

This sequence belongs to the cytochrome c oxidase subunit 3 family. In terms of assembly, component of the cytochrome c oxidase (complex IV, CIV), a multisubunit enzyme composed of 14 subunits. The complex is composed of a catalytic core of 3 subunits MT-CO1, MT-CO2 and MT-CO3, encoded in the mitochondrial DNA, and 11 supernumerary subunits COX4I, COX5A, COX5B, COX6A, COX6B, COX6C, COX7A, COX7B, COX7C, COX8 and NDUFA4, which are encoded in the nuclear genome. The complex exists as a monomer or a dimer and forms supercomplexes (SCs) in the inner mitochondrial membrane with NADH-ubiquinone oxidoreductase (complex I, CI) and ubiquinol-cytochrome c oxidoreductase (cytochrome b-c1 complex, complex III, CIII), resulting in different assemblies (supercomplex SCI(1)III(2)IV(1) and megacomplex MCI(2)III(2)IV(2)).

The protein resides in the mitochondrion inner membrane. It catalyses the reaction 4 Fe(II)-[cytochrome c] + O2 + 8 H(+)(in) = 4 Fe(III)-[cytochrome c] + 2 H2O + 4 H(+)(out). Functionally, component of the cytochrome c oxidase, the last enzyme in the mitochondrial electron transport chain which drives oxidative phosphorylation. The respiratory chain contains 3 multisubunit complexes succinate dehydrogenase (complex II, CII), ubiquinol-cytochrome c oxidoreductase (cytochrome b-c1 complex, complex III, CIII) and cytochrome c oxidase (complex IV, CIV), that cooperate to transfer electrons derived from NADH and succinate to molecular oxygen, creating an electrochemical gradient over the inner membrane that drives transmembrane transport and the ATP synthase. Cytochrome c oxidase is the component of the respiratory chain that catalyzes the reduction of oxygen to water. Electrons originating from reduced cytochrome c in the intermembrane space (IMS) are transferred via the dinuclear copper A center (CU(A)) of subunit 2 and heme A of subunit 1 to the active site in subunit 1, a binuclear center (BNC) formed by heme A3 and copper B (CU(B)). The BNC reduces molecular oxygen to 2 water molecules using 4 electrons from cytochrome c in the IMS and 4 protons from the mitochondrial matrix. This chain is Cytochrome c oxidase subunit 3 (MT-CO3), found in Hippopotamus amphibius (Hippopotamus).